The chain runs to 267 residues: MEKNIQTSRQIWRFQAGEPVRIDDPIAREQPVTLKINGEEFATLVCTPTYLQEMAIGFLVSEGLIQAYEEVKTIWIDDRQGFIHIELVRPIDRLHQHLQTKRYMGSCCGMSRQGFVFASDAKTAKKVQTRDVKLNAGDCFRLMAELQENARTFQQTGGVHNAALATKDGLLLMREDVGRHNALDKLYGHCLQNGLSLHGKLVVFSGRLSAEIILKVAKIGCELVLSKSAPTDRALQIAEELDITTVGFIRNRSMNVYTVPERIELKS.

Cys108 acts as the Cysteine persulfide intermediate in catalysis.

This sequence belongs to the FdhD family.

Its subcellular location is the cytoplasm. Its function is as follows. Required for formate dehydrogenase (FDH) activity. Acts as a sulfur carrier protein that transfers sulfur from IscS to the molybdenum cofactor prior to its insertion into FDH. This Shouchella clausii (strain KSM-K16) (Alkalihalobacillus clausii) protein is Sulfur carrier protein FdhD.